A 204-amino-acid polypeptide reads, in one-letter code: Thiamine-phosphate synthase (204 aa).

4-amino-2-methyl-5-(diphosphooxymethyl)pyrimidine contacts are provided by residues 28–32 and Asn-60; that span reads QLRIK. Mg(2+) is bound by residues Asp-61 and Asp-80. Residues Ser-99 and Lys-128 each coordinate 4-amino-2-methyl-5-(diphosphooxymethyl)pyrimidine. 2-[(2R,5Z)-2-carboxy-4-methylthiazol-5(2H)-ylidene]ethyl phosphate contacts are provided by residues Gly-157 and 177–178; that span reads VT.

This sequence belongs to the thiamine-phosphate synthase family. Mg(2+) is required as a cofactor.

The enzyme catalyses 2-[(2R,5Z)-2-carboxy-4-methylthiazol-5(2H)-ylidene]ethyl phosphate + 4-amino-2-methyl-5-(diphosphooxymethyl)pyrimidine + 2 H(+) = thiamine phosphate + CO2 + diphosphate. It catalyses the reaction 2-(2-carboxy-4-methylthiazol-5-yl)ethyl phosphate + 4-amino-2-methyl-5-(diphosphooxymethyl)pyrimidine + 2 H(+) = thiamine phosphate + CO2 + diphosphate. It carries out the reaction 4-methyl-5-(2-phosphooxyethyl)-thiazole + 4-amino-2-methyl-5-(diphosphooxymethyl)pyrimidine + H(+) = thiamine phosphate + diphosphate. The protein operates within cofactor biosynthesis; thiamine diphosphate biosynthesis; thiamine phosphate from 4-amino-2-methyl-5-diphosphomethylpyrimidine and 4-methyl-5-(2-phosphoethyl)-thiazole: step 1/1. Functionally, condenses 4-methyl-5-(beta-hydroxyethyl)thiazole monophosphate (THZ-P) and 2-methyl-4-amino-5-hydroxymethyl pyrimidine pyrophosphate (HMP-PP) to form thiamine monophosphate (TMP). This is Thiamine-phosphate synthase from Rhizobium etli (strain ATCC 51251 / DSM 11541 / JCM 21823 / NBRC 15573 / CFN 42).